Consider the following 476-residue polypeptide: Aspartyl/glutamyl-tRNA(Asn/Gln) amidotransferase subunit B (476 aa).

This sequence belongs to the GatB/GatE family. GatB subfamily. As to quaternary structure, heterotrimer of A, B and C subunits.

The catalysed reaction is L-glutamyl-tRNA(Gln) + L-glutamine + ATP + H2O = L-glutaminyl-tRNA(Gln) + L-glutamate + ADP + phosphate + H(+). It carries out the reaction L-aspartyl-tRNA(Asn) + L-glutamine + ATP + H2O = L-asparaginyl-tRNA(Asn) + L-glutamate + ADP + phosphate + 2 H(+). Allows the formation of correctly charged Asn-tRNA(Asn) or Gln-tRNA(Gln) through the transamidation of misacylated Asp-tRNA(Asn) or Glu-tRNA(Gln) in organisms which lack either or both of asparaginyl-tRNA or glutaminyl-tRNA synthetases. The reaction takes place in the presence of glutamine and ATP through an activated phospho-Asp-tRNA(Asn) or phospho-Glu-tRNA(Gln). This is Aspartyl/glutamyl-tRNA(Asn/Gln) amidotransferase subunit B from Neisseria meningitidis serogroup C / serotype 2a (strain ATCC 700532 / DSM 15464 / FAM18).